Here is a 528-residue protein sequence, read N- to C-terminus: 2-isopropylmalate synthase (528 aa).

In terms of domain architecture, Pyruvate carboxyltransferase spans 12–279 (IRIFDTTLRD…DSSINTPRIV (268 aa)). Positions 21, 214, 216, and 250 each coordinate Mn(2+). The tract at residues 401-528 (RLASMTISDV…TTEAPAPATA (128 aa)) is regulatory domain.

It belongs to the alpha-IPM synthase/homocitrate synthase family. LeuA type 1 subfamily. In terms of assembly, homodimer. Mn(2+) serves as cofactor.

The protein localises to the cytoplasm. The enzyme catalyses 3-methyl-2-oxobutanoate + acetyl-CoA + H2O = (2S)-2-isopropylmalate + CoA + H(+). Its pathway is amino-acid biosynthesis; L-leucine biosynthesis; L-leucine from 3-methyl-2-oxobutanoate: step 1/4. Functionally, catalyzes the condensation of the acetyl group of acetyl-CoA with 3-methyl-2-oxobutanoate (2-ketoisovalerate) to form 3-carboxy-3-hydroxy-4-methylpentanoate (2-isopropylmalate). The chain is 2-isopropylmalate synthase from Stenotrophomonas maltophilia (strain R551-3).